The chain runs to 197 residues: Imidazoleglycerol-phosphate dehydratase (197 aa).

It belongs to the imidazoleglycerol-phosphate dehydratase family.

It localises to the cytoplasm. It carries out the reaction D-erythro-1-(imidazol-4-yl)glycerol 3-phosphate = 3-(imidazol-4-yl)-2-oxopropyl phosphate + H2O. The protein operates within amino-acid biosynthesis; L-histidine biosynthesis; L-histidine from 5-phospho-alpha-D-ribose 1-diphosphate: step 6/9. In Saccharophagus degradans (strain 2-40 / ATCC 43961 / DSM 17024), this protein is Imidazoleglycerol-phosphate dehydratase.